Consider the following 342-residue polypeptide: L-threonine 3-dehydrogenase (342 aa).

Cys38 is a binding site for Zn(2+). Active-site charge relay system residues include Thr40 and His43. Zn(2+) contacts are provided by His63, Glu64, Cys93, Cys96, Cys99, and Cys107. NAD(+)-binding positions include Val175, Asp195, Arg200, 262-264 (LGI), and 286-287 (IY).

It belongs to the zinc-containing alcohol dehydrogenase family. Homotetramer. It depends on Zn(2+) as a cofactor.

The protein resides in the cytoplasm. It carries out the reaction L-threonine + NAD(+) = (2S)-2-amino-3-oxobutanoate + NADH + H(+). It participates in amino-acid degradation; L-threonine degradation via oxydo-reductase pathway; glycine from L-threonine: step 1/2. Its function is as follows. Catalyzes the NAD(+)-dependent oxidation of L-threonine to 2-amino-3-ketobutyrate. In Coxiella burnetii (strain Dugway 5J108-111), this protein is L-threonine 3-dehydrogenase.